Here is a 748-residue protein sequence, read N- to C-terminus: Far upstream element-binding protein 2 (748 aa).

Residues 1-78 (MSDYNTGGPP…GIRKDAFADA (78 aa)) are disordered. An N-acetylserine modification is found at Ser2. A compositionally biased stretch (pro residues) spans 8-17 (GPPPGPPPPA). Gly residues-rich tracts occupy residues 18-28 (GGGGGAAGAGG) and 36-69 (GAGDRGGGGPGGGGPGGGGASGGPSQPPGGGGPG). Arg40 carries the post-translational modification Omega-N-methylarginine. Position 88 is an N6-acetyllysine (Lys88). The interval 90–148 (GGDAATTVNNNTPDFGFGGQKRQLEDGDQPDSKKLASQGDSIGSQLGPIHPPPRTSMTE) is disordered. Thr101 is subject to Phosphothreonine. Over residues 111–123 (RQLEDGDQPDSKK) the composition is skewed to basic and acidic residues. Lys122 is covalently cross-linked (Glycyl lysine isopeptide (Lys-Gly) (interchain with G-Cter in SUMO1); alternate). Lys122 is covalently cross-linked (Glycyl lysine isopeptide (Lys-Gly) (interchain with G-Cter in SUMO2); alternate). Ser126, Ser130, Ser182, Ser185, Ser194, and Ser275 each carry phosphoserine. KH domains follow at residues 145-209 (SMTE…KMML), 234-300 (GTVQ…CEMV), and 323-387 (GGGI…ARII). The segment at 394–422 (LRSGPPGPPGAPGMPPGGRGRGRGQGNWG) is disordered. Over residues 398-408 (PPGPPGAPGMP) the composition is skewed to pro residues. The span at 409–422 (PGGRGRGRGQGNWG) shows a compositional bias: gly residues. Omega-N-methylarginine is present on residues Arg412, Arg414, Arg416, and Arg443. The KH 4 domain occupies 425–492 (GGEMTFSIPT…QQIDHAKQLI (68 aa)). Ser481 is subject to Phosphoserine. Residues 498-570 (GPLCPVGPGP…HDPNKAAAAA (73 aa)) form a disordered region. 2 stretches are compositionally biased toward pro residues: residues 502-521 (PVGPGPGGPGPAGPMGPFNP) and 529-543 (PGAPPHAGGPPPHQY). Copy 1 of the repeat occupies 572–583 (DPNAAWAAYYSH). Residues 572-685 (DPNAAWAAYY…SAAWAEYYRQ (114 aa)) are 4 X 12 AA imperfect repeats. Residues 588–614 (PPGPVPGPAPAPAAPPAQGEPPQPPPT) show a composition bias toward pro residues. 3 disordered regions span residues 588–650 (PPGP…KAWE), 659–678 (VATGGGPGAPPGSQPDYSAA), and 689–735 (YYGQ…PALV). 3 consecutive repeat copies span residues 618-629 (DYTKAWEEYYKK), 644-655 (DYTKAWEEYYKK), and 674-685 (DYSAAWAEYYRQ).

The protein belongs to the KHSRP family. Part of a ternary complex containing FUBP2, PTBP1, PTBP2 and HNRPH1. Interacts with PARN. Interacts with PQBP1.

The protein resides in the nucleus. It is found in the cytoplasm. Functionally, binds to the dendritic targeting element and may play a role in mRNA trafficking. Part of a ternary complex that binds to the downstream control sequence (DCS) of the pre-mRNA. Mediates exon inclusion in transcripts that are subject to tissue-specific alternative splicing. May interact with single-stranded DNA from the far-upstream element (FUSE). May activate gene expression. Also involved in degradation of inherently unstable mRNAs that contain AU-rich elements (AREs) in their 3'-UTR, possibly by recruiting degradation machinery to ARE-containing mRNAs. The protein is Far upstream element-binding protein 2 (Khsrp) of Mus musculus (Mouse).